Reading from the N-terminus, the 208-residue chain is uncharacterized protein (208 aa).

A compositionally biased stretch (basic and acidic residues) spans 1 to 18 (MSPTKDSHPSPHFPRDSG). Disordered stretches follow at residues 1 to 122 (MSPT…LPPP) and 135 to 208 (RECH…TPDG).

This is an uncharacterized protein from Homo sapiens (Human).